The following is a 139-amino-acid chain: Bilirubin-inducible fluorescent protein UnaG (139 aa).

Residues N57, T61, S80, R112, and 132–134 (RSY) contribute to the (4Z,15Z)-bilirubin IXalpha site.

It belongs to the calycin superfamily. Fatty-acid binding protein (FABP) family. As to quaternary structure, monomer. In terms of tissue distribution, detected in small-diameter muscle fibers from the white muscle layer from juvenile animals (glass eels) (at protein level). Detected in small-diameter muscle fibers from juvenile animals (glass eels).

It is found in the cytoplasm. Beta-barrel protein that binds unconjugated bilirubin with high affinity. Excitation of the bilirubin-bound protein gives rise to green fluorescence, both under normoxia and hypoxia. The apoprotein is not fluorescent. Does not emit fluorescence in the presence of ditauro-bilirubin, urobilin or biliverdin. In Anguilla japonica (Japanese eel), this protein is Bilirubin-inducible fluorescent protein UnaG.